The following is a 105-amino-acid chain: Small ribosomal subunit protein uS10 (105 aa).

It belongs to the universal ribosomal protein uS10 family. In terms of assembly, part of the 30S ribosomal subunit.

In terms of biological role, involved in the binding of tRNA to the ribosomes. The chain is Small ribosomal subunit protein uS10 from Rickettsia peacockii (strain Rustic).